Here is a 175-residue protein sequence, read N- to C-terminus: NADH-ubiquinone oxidoreductase chain 6 (175 aa).

5 helical membrane-spanning segments follow: residues Met-1 to Ser-21, Ser-25 to Met-45, Phe-47 to Val-67, Thr-88 to Phe-108, and Tyr-149 to Leu-169.

Belongs to the complex I subunit 6 family. In terms of assembly, core subunit of respiratory chain NADH dehydrogenase (Complex I) which is composed of 45 different subunits.

The protein resides in the mitochondrion inner membrane. It carries out the reaction a ubiquinone + NADH + 5 H(+)(in) = a ubiquinol + NAD(+) + 4 H(+)(out). Its function is as follows. Core subunit of the mitochondrial membrane respiratory chain NADH dehydrogenase (Complex I) which catalyzes electron transfer from NADH through the respiratory chain, using ubiquinone as an electron acceptor. Essential for the catalytic activity and assembly of complex I. The chain is NADH-ubiquinone oxidoreductase chain 6 (MT-ND6) from Rhinoceros unicornis (Greater Indian rhinoceros).